A 192-amino-acid chain; its full sequence is Acetolactate synthase small subunit (192 aa).

The ACT domain occupies 29–103; sequence IITVKVRNEM…DTLKVSDLTD (75 aa).

The protein belongs to the acetolactate synthase small subunit family. In terms of assembly, dimer of large and small chains.

It catalyses the reaction 2 pyruvate + H(+) = (2S)-2-acetolactate + CO2. The protein operates within amino-acid biosynthesis; L-isoleucine biosynthesis; L-isoleucine from 2-oxobutanoate: step 1/4. It participates in amino-acid biosynthesis; L-valine biosynthesis; L-valine from pyruvate: step 1/4. The polypeptide is Acetolactate synthase small subunit (ilvH) (Aquifex aeolicus (strain VF5)).